A 141-amino-acid polypeptide reads, in one-letter code: Large ribosomal subunit protein uL11 (141 aa).

Belongs to the universal ribosomal protein uL11 family. Part of the ribosomal stalk of the 50S ribosomal subunit. Interacts with L10 and the large rRNA to form the base of the stalk. L10 forms an elongated spine to which L12 dimers bind in a sequential fashion forming a multimeric L10(L12)X complex. One or more lysine residues are methylated.

Functionally, forms part of the ribosomal stalk which helps the ribosome interact with GTP-bound translation factors. This is Large ribosomal subunit protein uL11 from Syntrophomonas wolfei subsp. wolfei (strain DSM 2245B / Goettingen).